A 417-amino-acid polypeptide reads, in one-letter code: Gamma-glutamyl phosphate reductase (417 aa).

This sequence belongs to the gamma-glutamyl phosphate reductase family.

It localises to the cytoplasm. The catalysed reaction is L-glutamate 5-semialdehyde + phosphate + NADP(+) = L-glutamyl 5-phosphate + NADPH + H(+). It functions in the pathway amino-acid biosynthesis; L-proline biosynthesis; L-glutamate 5-semialdehyde from L-glutamate: step 2/2. Catalyzes the NADPH-dependent reduction of L-glutamate 5-phosphate into L-glutamate 5-semialdehyde and phosphate. The product spontaneously undergoes cyclization to form 1-pyrroline-5-carboxylate. The chain is Gamma-glutamyl phosphate reductase from Desulfitobacterium hafniense (strain DSM 10664 / DCB-2).